The sequence spans 354 residues: Transcription factor ATOH1 (354 aa).

Positions M1 to R21 are enriched in basic and acidic residues. Disordered regions lie at residues M1–L55 and E91–V122. Over residues H26–P38 the composition is skewed to pro residues. Basic and acidic residues predominate over residues A94–R107. Low complexity predominate over residues R108–V122. Positions Q159–L211 constitute a bHLH domain. Disordered stretches follow at residues Q216 to S277 and S312 to S354. Over residues N250 to Q264 the composition is skewed to low complexity. The span at H335–S354 shows a compositional bias: basic and acidic residues.

As to quaternary structure, efficient DNA binding requires dimerization with another bHLH protein.

It is found in the nucleus. Functionally, transcriptional regulator. Activates E box-dependent transcription in collaboration with TCF3/E47, but the activity is completely antagonized by the negative regulator of neurogenesis HES1. Plays a role in the differentiation of subsets of neural cells by activating E box-dependent transcription. The protein is Transcription factor ATOH1 of Homo sapiens (Human).